The sequence spans 375 residues: Alcohol dehydrogenase 3, mitochondrial (375 aa).

A mitochondrion-targeting transit peptide spans 1-24 (MLRTSTLFTRRVQPSLFSRNILRL). Cys71 serves as a coordination point for Zn(2+). His72, Thr73, and His76 together coordinate NAD(+). Residues His94, Glu95, Cys125, Cys128, Cys131, Cys139, and Cys181 each contribute to the Zn(2+) site. Positions 208, 209, 210, 229, 234, 249, 296, 321, 323, and 368 each coordinate NAD(+).

It belongs to the zinc-containing alcohol dehydrogenase family. In terms of assembly, homotetramer. Requires Zn(2+) as cofactor.

The protein resides in the mitochondrion matrix. It is found in the mitochondrion inner membrane. The catalysed reaction is a primary alcohol + NAD(+) = an aldehyde + NADH + H(+). It catalyses the reaction a secondary alcohol + NAD(+) = a ketone + NADH + H(+). The enzyme catalyses ethanol + NAD(+) = acetaldehyde + NADH + H(+). It carries out the reaction butan-1-ol + NAD(+) = butanal + NADH + H(+). The catalysed reaction is hexan-1-ol + NAD(+) = hexanal + NADH + H(+). Functionally, mitochondrial isozyme that reduces acetaldehyde to ethanol during the fermentation of glucose. Involved in the shuttling of mitochondrial reducing equivalents to the cytosol, where the redox balance is restored by NADH dehydrogenases on the external side of the mitochondrial inner membrane. Shows a high affinity for alcohols with a double bond conjugated to the alcohol group. The chain is Alcohol dehydrogenase 3, mitochondrial (ADH3) from Saccharomyces cerevisiae (strain ATCC 204508 / S288c) (Baker's yeast).